Reading from the N-terminus, the 72-residue chain is Protein RALF-like 12 (72 aa).

The N-terminal stretch at 1 to 17 (MKAWVIGLLVICAVVIA) is a signal peptide. 2 disulfides stabilise this stretch: C34–C43 and C63–C69. The interval 37-60 (PNPPPGCNPPGTEQKNPTPVNEYS) is disordered.

This sequence belongs to the plant rapid alkalinization factor (RALF) family.

It is found in the secreted. In terms of biological role, cell signaling peptide that may regulate plant stress, growth, and development. Mediates a rapid alkalinization of extracellular space by mediating a transient increase in the cytoplasmic Ca(2+) concentration leading to a calcium-dependent signaling events through a cell surface receptor and a concomitant activation of some intracellular mitogen-activated protein kinases. The protein is Protein RALF-like 12 (RALFL12) of Arabidopsis thaliana (Mouse-ear cress).